The primary structure comprises 180 residues: UPF0340 protein RBAM_034070 (180 aa).

The protein belongs to the UPF0340 family.

This Bacillus velezensis (strain DSM 23117 / BGSC 10A6 / LMG 26770 / FZB42) (Bacillus amyloliquefaciens subsp. plantarum) protein is UPF0340 protein RBAM_034070.